A 564-amino-acid chain; its full sequence is Proline--tRNA ligase (564 aa).

The protein belongs to the class-II aminoacyl-tRNA synthetase family. ProS type 1 subfamily. In terms of assembly, homodimer.

The protein resides in the cytoplasm. The enzyme catalyses tRNA(Pro) + L-proline + ATP = L-prolyl-tRNA(Pro) + AMP + diphosphate. Catalyzes the attachment of proline to tRNA(Pro) in a two-step reaction: proline is first activated by ATP to form Pro-AMP and then transferred to the acceptor end of tRNA(Pro). As ProRS can inadvertently accommodate and process non-cognate amino acids such as alanine and cysteine, to avoid such errors it has two additional distinct editing activities against alanine. One activity is designated as 'pretransfer' editing and involves the tRNA(Pro)-independent hydrolysis of activated Ala-AMP. The other activity is designated 'posttransfer' editing and involves deacylation of mischarged Ala-tRNA(Pro). The misacylated Cys-tRNA(Pro) is not edited by ProRS. This Coxiella burnetii (strain Dugway 5J108-111) protein is Proline--tRNA ligase.